The sequence spans 134 residues: Cytochrome b5 (134 aa).

Ala2 is modified (N-acetylalanine). N6-acetyllysine occurs at positions 7, 10, and 19. Positions 9–85 (VKYYTLEEIQ…SKTYIIGELH (77 aa)) constitute a Cytochrome b5 heme-binding domain. Residues His44 and His68 each contribute to the heme site. Residues 109-131 (WWTNWVIPAISALAVALMYRLYM) traverse the membrane as a helical segment.

It belongs to the cytochrome b5 family.

The protein resides in the endoplasmic reticulum membrane. Its subcellular location is the microsome membrane. In terms of biological role, cytochrome b5 is a membrane-bound hemoprotein functioning as an electron carrier for several membrane-bound oxygenases. It is also involved in several steps of the sterol biosynthesis pathway, particularly in the C-5 double bond introduction during the C-5 desaturation. The sequence is that of Cytochrome b5 (Cyb5a) from Mus musculus (Mouse).